A 175-amino-acid chain; its full sequence is MLNLIADQAWNPFAPFGVTSWEPFVANLIAFILMVVILRYLAFKPIQNVLEKRRQRIEEGEEMREESERQLASVKEQTHEMLVEAGEKGQEKIDAAKAAAARLLEEQEAEASRKAEEIIKKARQLAELEQQKEREALKEQFGQLVALAAAQVTGKMLTEEDQRRINREAIDSLDS.

Residues 18-38 traverse the membrane as a helical segment; it reads VTSWEPFVANLIAFILMVVIL.

This sequence belongs to the ATPase B chain family. F-type ATPases have 2 components, F(1) - the catalytic core - and F(0) - the membrane proton channel. F(1) has five subunits: alpha(3), beta(3), gamma(1), delta(1), epsilon(1). F(0) has three main subunits: a(1), b(2) and c(10-14). The alpha and beta chains form an alternating ring which encloses part of the gamma chain. F(1) is attached to F(0) by a central stalk formed by the gamma and epsilon chains, while a peripheral stalk is formed by the delta and b chains.

It localises to the cell inner membrane. Functionally, f(1)F(0) ATP synthase produces ATP from ADP in the presence of a proton or sodium gradient. F-type ATPases consist of two structural domains, F(1) containing the extramembraneous catalytic core and F(0) containing the membrane proton channel, linked together by a central stalk and a peripheral stalk. During catalysis, ATP synthesis in the catalytic domain of F(1) is coupled via a rotary mechanism of the central stalk subunits to proton translocation. Component of the F(0) channel, it forms part of the peripheral stalk, linking F(1) to F(0). The chain is ATP synthase subunit b from Akkermansia muciniphila (strain ATCC BAA-835 / DSM 22959 / JCM 33894 / BCRC 81048 / CCUG 64013 / CIP 107961 / Muc).